The sequence spans 370 residues: Ribosomal RNA small subunit methyltransferase H (370 aa).

S-adenosyl-L-methionine contacts are provided by residues 85-87, D104, Y131, D152, and Q159; that span reads GGH. 2 stretches are compositionally biased toward basic and acidic residues: residues 332-345 and 353-370; these read GAERATPEEIERNP and RALEKVAGRPTTARRDAR. The tract at residues 332–370 is disordered; that stretch reads GAERATPEEIERNPRSAPVRLRALEKVAGRPTTARRDAR.

The protein belongs to the methyltransferase superfamily. RsmH family.

Its subcellular location is the cytoplasm. The enzyme catalyses cytidine(1402) in 16S rRNA + S-adenosyl-L-methionine = N(4)-methylcytidine(1402) in 16S rRNA + S-adenosyl-L-homocysteine + H(+). Its function is as follows. Specifically methylates the N4 position of cytidine in position 1402 (C1402) of 16S rRNA. This is Ribosomal RNA small subunit methyltransferase H from Mycobacterium sp. (strain KMS).